Here is a 311-residue protein sequence, read N- to C-terminus: Ribosomal RNA small subunit methyltransferase H (311 aa).

S-adenosyl-L-methionine-binding positions include 32–34 (AGH), Asp52, Phe79, Asp100, and Gln107.

It belongs to the methyltransferase superfamily. RsmH family.

The protein resides in the cytoplasm. The enzyme catalyses cytidine(1402) in 16S rRNA + S-adenosyl-L-methionine = N(4)-methylcytidine(1402) in 16S rRNA + S-adenosyl-L-homocysteine + H(+). Functionally, specifically methylates the N4 position of cytidine in position 1402 (C1402) of 16S rRNA. This is Ribosomal RNA small subunit methyltransferase H from Staphylococcus aureus (strain Mu3 / ATCC 700698).